The sequence spans 466 residues: Alpha-1,3-mannosyltransferase CMT1 (466 aa).

Residues 1–23 form a disordered region; it reads MFRNTLRTFPRPATPSLPTSSHS. Residues 1 to 33 lie on the Cytoplasmic side of the membrane; sequence MFRNTLRTFPRPATPSLPTSSHSPIARASLSKS. Residues 34 to 54 traverse the membrane as a helical; Signal-anchor for type II membrane protein segment; the sequence is PLFVLSLVLVCIFFLSFLSHP. Over 55 to 466 the chain is Lumenal; it reads DPSARKLQWP…ETRWVQPWLE (412 aa).

Mg(2+) serves as cofactor. The cofactor is Mn(2+). Co(2+) is required as a cofactor.

The protein localises to the golgi apparatus membrane. It functions in the pathway protein modification; protein glycosylation. Responsible for addition of mannose residues in an alpha-1,3 linkage to a polymannosly precursor. May be involved in synthesis of capsule glucuronoxylomannan. In Cryptococcus neoformans var. neoformans serotype D (strain JEC21 / ATCC MYA-565) (Filobasidiella neoformans), this protein is Alpha-1,3-mannosyltransferase CMT1.